Reading from the N-terminus, the 424-residue chain is Histidine--tRNA ligase (424 aa).

This sequence belongs to the class-II aminoacyl-tRNA synthetase family. As to quaternary structure, homodimer.

It localises to the cytoplasm. It catalyses the reaction tRNA(His) + L-histidine + ATP = L-histidyl-tRNA(His) + AMP + diphosphate + H(+). In Edwardsiella ictaluri (strain 93-146), this protein is Histidine--tRNA ligase.